A 323-amino-acid chain; its full sequence is Ribonuclease Z (323 aa).

Zn(2+) is bound by residues His62, His64, Asp66, His67, His140, Asp211, and His270. Asp66 serves as the catalytic Proton acceptor.

This sequence belongs to the RNase Z family. In terms of assembly, homodimer. Zn(2+) serves as cofactor.

The catalysed reaction is Endonucleolytic cleavage of RNA, removing extra 3' nucleotides from tRNA precursor, generating 3' termini of tRNAs. A 3'-hydroxy group is left at the tRNA terminus and a 5'-phosphoryl group is left at the trailer molecule.. Zinc phosphodiesterase, which displays some tRNA 3'-processing endonuclease activity. Probably involved in tRNA maturation, by removing a 3'-trailer from precursor tRNA. In Marinobacter nauticus (strain ATCC 700491 / DSM 11845 / VT8) (Marinobacter aquaeolei), this protein is Ribonuclease Z.